Here is a 379-residue protein sequence, read N- to C-terminus: Cytochrome b (379 aa).

4 helical membrane passes run 33–53 (FGSLLGICLGLQIITGLFLAM), 77–98 (WLIRYLHANGASMFFILLYLHI), 113–133 (WNIGILLLFAVMATAFMGYVL), and 178–198 (FFAFHFILPFIIPALVMIHFF). Positions 83 and 97 each coordinate heme b. Heme b contacts are provided by His182 and His196. His201 serves as a coordination point for a ubiquinone. A run of 4 helical transmembrane segments spans residues 226–246 (IKDIMGLLIMMLALMSLVLFS), 288–308 (LGGVLALVLSILVLALFPMLH), 320–340 (FSQCLLWMLTANLFILTWIGG), and 347–367 (YITIGQLASINYFFTILIVSR).

It belongs to the cytochrome b family. The cytochrome bc1 complex contains 11 subunits: 3 respiratory subunits (MT-CYB, CYC1 and UQCRFS1), 2 core proteins (UQCRC1 and UQCRC2) and 6 low-molecular weight proteins (UQCRH/QCR6, UQCRB/QCR7, UQCRQ/QCR8, UQCR10/QCR9, UQCR11/QCR10 and a cleavage product of UQCRFS1). This cytochrome bc1 complex then forms a dimer. Heme b is required as a cofactor.

The protein localises to the mitochondrion inner membrane. In terms of biological role, component of the ubiquinol-cytochrome c reductase complex (complex III or cytochrome b-c1 complex) that is part of the mitochondrial respiratory chain. The b-c1 complex mediates electron transfer from ubiquinol to cytochrome c. Contributes to the generation of a proton gradient across the mitochondrial membrane that is then used for ATP synthesis. The sequence is that of Cytochrome b (MT-CYB) from Dolichotis patagonum (Patagonian mara).